The sequence spans 264 residues: 5'-nucleotidase SurE (264 aa).

Residues Asp10, Asp11, Ser43, and Asn99 each coordinate a divalent metal cation.

The protein belongs to the SurE nucleotidase family. A divalent metal cation serves as cofactor.

It localises to the cytoplasm. The enzyme catalyses a ribonucleoside 5'-phosphate + H2O = a ribonucleoside + phosphate. Functionally, nucleotidase that shows phosphatase activity on nucleoside 5'-monophosphates. This chain is 5'-nucleotidase SurE, found in Methanococcus vannielii (strain ATCC 35089 / DSM 1224 / JCM 13029 / OCM 148 / SB).